The chain runs to 376 residues: Inactive CLIP domain-containing serine protease A28 (376 aa).

Positions methionine 1 to glycine 19 are cleaved as a signal peptide. Positions glutamate 24–glutamine 80 constitute a Clip domain. Cystine bridges form between cysteine 28–cysteine 78, cysteine 33–cysteine 71, and cysteine 39–cysteine 79. N-linked (GlcNAc...) asparagine glycosylation is present at asparagine 41. The segment at proline 85 to threonine 106 is disordered. A Peptidase S1 domain is found at asparagine 114–valine 364. 2 N-linked (GlcNAc...) asparagine glycosylation sites follow: asparagine 125 and asparagine 279. 3 disulfide bridges follow: cysteine 251–cysteine 321, cysteine 280–cysteine 301, and cysteine 311–cysteine 340. Asparagine 369 carries an N-linked (GlcNAc...) asparagine glycan.

Belongs to the peptidase S1 family. CLIP subfamily. May form a heterodimer of a light chain and a heavy chain; disulfide-linked. In terms of processing, secreted as a full-length protein. Proteolytically cleaved into two chains which probably remain covalently linked. Cleavage is induced by fungus B.bassiana and Gram-positive or Gram-negative bacteria infection.

The protein resides in the secreted. In terms of biological role, inactive serine protease which plays an essential role in the innate immune response against bacteria, fungi and protozoa infection by activating the melanization cascade. In the melanization cascade, acts downstream of TEP1, SPCLIP1 and CLIPA8 to promote CLIPC9 proteolytic cleavage. In the susceptible strain G3, appears to be dispensable for parasite P.berghei ookinete elimination which occurs by lysis. Required for the melanization of Gram-positive and Gram-negative bacteria. Required for the melanization of fungus B.bassiana. The sequence is that of Inactive CLIP domain-containing serine protease A28 from Anopheles gambiae (African malaria mosquito).